Consider the following 164-residue polypeptide: Choriogonadotropin subunit beta (164 aa).

Residues 1-20 (MEMLQGLLLCLLLSTGGAWA) form the signal peptide. Disulfide bonds link Cys29–Cys77, Cys43–Cys92, Cys46–Cys130, Cys54–Cys108, Cys58–Cys110, and Cys113–Cys120. N-linked (GlcNAc...) asparagine glycosylation occurs at Asn50. Residues 133-164 (HTSQDSSSKDPPRNLTSPSQLPEPADAPLVPQ) form a disordered region. Ser140 is a glycosylation site (O-linked (GalNAc...) serine). An N-linked (GlcNAc...) asparagine glycan is attached at Asn146. An O-linked (GalNAc...) serine glycan is attached at Ser151.

It belongs to the glycoprotein hormones subunit beta family. As to quaternary structure, heterodimer of a common alpha chain and a unique beta chain which confers biological specificity to thyrotropin, lutropin, follitropin and gonadotropin.

It localises to the secreted. In terms of biological role, stimulates the ovaries to synthesize the steroids that are essential for the maintenance of pregnancy. This chain is Choriogonadotropin subunit beta (CGB), found in Aotus nancymaae (Ma's night monkey).